Here is a 477-residue protein sequence, read N- to C-terminus: Xylose isomerase (477 aa).

The active site involves H142. 7 residues coordinate Mn(2+): E273, E309, H312, D337, D348, D350, and D380.

This sequence belongs to the xylose isomerase family. Requires Mn(2+) as cofactor.

The enzyme catalyses alpha-D-xylose = alpha-D-xylulofuranose. In Arabidopsis thaliana (Mouse-ear cress), this protein is Xylose isomerase (XYLA).